The primary structure comprises 331 residues: Phosphate acyltransferase (331 aa).

The protein belongs to the PlsX family. In terms of assembly, homodimer. Probably interacts with PlsY.

It is found in the cytoplasm. The enzyme catalyses a fatty acyl-[ACP] + phosphate = an acyl phosphate + holo-[ACP]. The protein operates within lipid metabolism; phospholipid metabolism. Catalyzes the reversible formation of acyl-phosphate (acyl-PO(4)) from acyl-[acyl-carrier-protein] (acyl-ACP). This enzyme utilizes acyl-ACP as fatty acyl donor, but not acyl-CoA. This chain is Phosphate acyltransferase, found in Exiguobacterium sibiricum (strain DSM 17290 / CCUG 55495 / CIP 109462 / JCM 13490 / 255-15).